We begin with the raw amino-acid sequence, 160 residues long: CXXC motif containing zinc binding protein (160 aa).

The Zn(2+) site is built by C33, C36, C67, and C70.

It belongs to the UPF0587 family.

The sequence is that of CXXC motif containing zinc binding protein (czib) from Xenopus laevis (African clawed frog).